The primary structure comprises 476 residues: Ataxin-10 (476 aa).

Position 10 is an omega-N-methylarginine (R10). A phosphoserine mark is found at S13 and S78. A Phosphothreonine modification is found at T83. S431 is modified (phosphoserine).

This sequence belongs to the ataxin-10 family. As to quaternary structure, homooligomer. Interacts with GNB2. Interacts with IQCB1. Interacts with OGT. In terms of processing, polyubiquitinated. Phosphorylation at Ser-13 by AURKB promotes the association of ATXN10 with PLK1. Phosphorylation at Ser-78 and Thr-83 by PLK1 may play a role in the regulation of cytokinesis and may stimulate the proteasome-mediated degradation of ATXN10.

It localises to the cytoplasm. Its subcellular location is the perinuclear region. The protein localises to the midbody. It is found in the cytoskeleton. The protein resides in the cilium basal body. It localises to the microtubule organizing center. Its subcellular location is the centrosome. The protein localises to the centriole. In terms of biological role, may play a role in the regulation of cytokinesis. May play a role in signaling by stimulating protein glycosylation. Induces neuritogenesis by activating the Ras-MAP kinase pathway and is necessary for the survival of cerebellar neurons. Does not appear to play a major role in ciliogenesis. In Pongo abelii (Sumatran orangutan), this protein is Ataxin-10 (ATXN10).